We begin with the raw amino-acid sequence, 431 residues long: Chorismate synthase 2, chloroplastic (431 aa).

A chloroplast-targeting transit peptide spans 1 to 48 (MASSMLTKQFLGAPFSSFGSGQQPSKLCSSNLRFPTHRSQPKRLEIQA). Residues 93–141 (DRRRPGQSRITTPRKETDTCKISSGTADGLTTGSPIKVEVPNTDQRGND) form a disordered region. Residues 112 to 126 (CKISSGTADGLTTGS) show a composition bias toward polar residues.

Belongs to the chorismate synthase family. Homotetramer. FMNH2 is required as a cofactor. Predominantly expressed in flowers and roots and, to a lesser extent, in stems, leaves, and cotyledons.

It is found in the plastid. The protein localises to the chloroplast. The enzyme catalyses 5-O-(1-carboxyvinyl)-3-phosphoshikimate = chorismate + phosphate. Its pathway is metabolic intermediate biosynthesis; chorismate biosynthesis; chorismate from D-erythrose 4-phosphate and phosphoenolpyruvate: step 7/7. In terms of biological role, catalyzes the last common step of the biosynthesis of aromatic amino acids, produced via the shikimic acid pathway. The chain is Chorismate synthase 2, chloroplastic (CS2) from Solanum lycopersicum (Tomato).